The following is a 775-amino-acid chain: Serine/threonine-protein kinase-like protein CCR1 (775 aa).

Positions 1–23 (METRCSLLFLSLILLYLPKPGSG) are cleaved as a signal peptide. The Extracellular segment spans residues 24 to 439 (FGSSGPIAAS…DKHWHQLQRL (416 aa)). N-linked (GlcNAc...) asparagine glycosylation is found at N57, N102, N167, N213, N220, N241, N261, N292, N328, and N360. A TNFR-Cys repeat occupies 351–406 (PCNEKEFAFNASILNEPDLTSLCVRKELMVCSPCGSDCSHGFFLSSSCTANSDRIC). Disulfide bonds link C352–C381, C384–C398, and C388–C406. N-linked (GlcNAc...) asparagine glycosylation occurs at N414. Residues 440–460 (VLIIGSCASALLIIIIGCCVV) form a helical membrane-spanning segment. Over 461–775 (PRIVTSPNKE…EHVARDALIF (315 aa)) the chain is Cytoplasmic. One can recognise a Protein kinase domain in the interval 520 to 770 (FKEFNELGRG…LANWLEHVAR (251 aa)). ATP is bound by residues 526-534 (LGRGSYGFV) and K548. The Proton acceptor role is filled by D645.

Belongs to the protein kinase superfamily. Ser/Thr protein kinase family. As to quaternary structure, homodimer. As to expression, expressed in roots, leaves, shoot apical meristems (SAM), and floral buds.

It localises to the membrane. The enzyme catalyses L-seryl-[protein] + ATP = O-phospho-L-seryl-[protein] + ADP + H(+). It carries out the reaction L-threonyl-[protein] + ATP = O-phospho-L-threonyl-[protein] + ADP + H(+). Its function is as follows. Serine/threonine-protein kinase with low activity. The protein is Serine/threonine-protein kinase-like protein CCR1 (CCR1) of Arabidopsis thaliana (Mouse-ear cress).